We begin with the raw amino-acid sequence, 177 residues long: ATP synthase subunit delta (177 aa).

This sequence belongs to the ATPase delta chain family. In terms of assembly, F-type ATPases have 2 components, F(1) - the catalytic core - and F(0) - the membrane proton channel. F(1) has five subunits: alpha(3), beta(3), gamma(1), delta(1), epsilon(1). F(0) has three main subunits: a(1), b(2) and c(10-14). The alpha and beta chains form an alternating ring which encloses part of the gamma chain. F(1) is attached to F(0) by a central stalk formed by the gamma and epsilon chains, while a peripheral stalk is formed by the delta and b chains.

The protein resides in the cell membrane. Functionally, f(1)F(0) ATP synthase produces ATP from ADP in the presence of a proton or sodium gradient. F-type ATPases consist of two structural domains, F(1) containing the extramembraneous catalytic core and F(0) containing the membrane proton channel, linked together by a central stalk and a peripheral stalk. During catalysis, ATP synthesis in the catalytic domain of F(1) is coupled via a rotary mechanism of the central stalk subunits to proton translocation. Its function is as follows. This protein is part of the stalk that links CF(0) to CF(1). It either transmits conformational changes from CF(0) to CF(1) or is implicated in proton conduction. In Buchnera aphidicola subsp. Acyrthosiphon pisum (strain 5A), this protein is ATP synthase subunit delta.